A 257-amino-acid chain; its full sequence is Zinc finger protein 8 (257 aa).

Disordered regions lie at residues 48–92, 108–128, and 214–238; these read GDNS…NNNN, QALG…KRGS, and GVYS…PNNW. A compositionally biased stretch (polar residues) spans 50-65; it reads NSDNLSAEPSDHQTTT. The segment covering 66–92 has biased composition (basic and acidic residues); that stretch reads KNDESSENIKDKDKEKDKDKDKDNNNN. The C2H2-type zinc finger occupies 95–117; the sequence is FECHYCFRNFPTSQALGGHQNAH. The segment covering 115 to 126 has biased composition (basic residues); the sequence is NAHKRERQHAKR.

In terms of tissue distribution, expressed in developing cauline leaves.

The protein localises to the nucleus. Probable transcription factor required for the initiation of inflorescence trichomes in response to gibberellin and cytokinin. Is not involved in the regulation of trichome branching. Is functionally equivalent to GIS2. Acts as a negative regulator of abscisic acid (ABA) signaling during germination and early seedling development. The chain is Zinc finger protein 8 from Arabidopsis thaliana (Mouse-ear cress).